The following is an 884-amino-acid chain: Protein P (884 aa).

Residues Met-1–Gln-184 form a terminal protein domain (TP) region. Residues Leu-185–Leu-387 form a spacer region. Disordered stretches follow at residues Pro-218–Thr-241 and Arg-299–Ser-345. 2 stretches are compositionally biased toward polar residues: residues Val-222–Thr-241 and Tyr-323–Tyr-332. The polymerase/reverse transcriptase domain (RT) stretch occupies residues Asp-388–Gln-729. The 242-residue stretch at Asp-398–Ile-639 folds into the Reverse transcriptase domain. Positions 470, 590, and 591 each coordinate Mg(2+).

Belongs to the hepadnaviridae P protein family.

It catalyses the reaction DNA(n) + a 2'-deoxyribonucleoside 5'-triphosphate = DNA(n+1) + diphosphate. The enzyme catalyses Endonucleolytic cleavage to 5'-phosphomonoester.. Activated by host HSP70 and HSP40 in vitro to be able to bind the epsilon loop of the pgRNA. Because deletion of the RNase H region renders the protein partly chaperone-independent, the chaperones may be needed indirectly to relieve occlusion of the RNA-binding site by this domain. Inhibited by several reverse-transcriptase inhibitors: Lamivudine, Adefovir and Entecavir. Multifunctional enzyme that converts the viral RNA genome into dsDNA in viral cytoplasmic capsids. This enzyme displays a DNA polymerase activity that can copy either DNA or RNA templates, and a ribonuclease H (RNase H) activity that cleaves the RNA strand of RNA-DNA heteroduplexes in a partially processive 3'- to 5'-endonucleasic mode. Neo-synthesized pregenomic RNA (pgRNA) are encapsidated together with the P protein, and reverse-transcribed inside the nucleocapsid. Initiation of reverse-transcription occurs first by binding the epsilon loop on the pgRNA genome, and is initiated by protein priming, thereby the 5'-end of (-)DNA is covalently linked to P protein. Partial (+)DNA is synthesized from the (-)DNA template and generates the relaxed circular DNA (RC-DNA) genome. After budding and infection, the RC-DNA migrates in the nucleus, and is converted into a plasmid-like covalently closed circular DNA (cccDNA). The activity of P protein does not seem to be necessary for cccDNA generation, and is presumably released from (+)DNA by host nuclear DNA repair machinery. This is Protein P from Marmota monax (Woodchuck).